The chain runs to 242 residues: Uridylate kinase (242 aa).

Position 15-18 (15-18 (KLSG)) interacts with ATP. An involved in allosteric activation by GTP region spans residues 23–28 (GDEGFG). Gly57 contributes to the UMP binding site. Residues Gly58 and Arg62 each coordinate ATP. UMP contacts are provided by residues Asp77 and 138–145 (TGNPFCTT). The ATP site is built by Thr165, Tyr171, and Asp174.

Belongs to the UMP kinase family. Homohexamer.

It localises to the cytoplasm. It catalyses the reaction UMP + ATP = UDP + ADP. It functions in the pathway pyrimidine metabolism; CTP biosynthesis via de novo pathway; UDP from UMP (UMPK route): step 1/1. With respect to regulation, allosterically activated by GTP. Inhibited by UTP. Functionally, catalyzes the reversible phosphorylation of UMP to UDP. The polypeptide is Uridylate kinase (Shewanella sp. (strain MR-4)).